Reading from the N-terminus, the 239-residue chain is 2,3,4,5-tetrahydropyridine-2,6-dicarboxylate N-acetyltransferase (239 aa).

It belongs to the transferase hexapeptide repeat family. DapH subfamily.

The catalysed reaction is (S)-2,3,4,5-tetrahydrodipicolinate + acetyl-CoA + H2O = L-2-acetamido-6-oxoheptanedioate + CoA. It participates in amino-acid biosynthesis; L-lysine biosynthesis via DAP pathway; LL-2,6-diaminopimelate from (S)-tetrahydrodipicolinate (acetylase route): step 1/3. Functionally, catalyzes the transfer of an acetyl group from acetyl-CoA to tetrahydrodipicolinate. The protein is 2,3,4,5-tetrahydropyridine-2,6-dicarboxylate N-acetyltransferase of Staphylococcus aureus (strain MRSA252).